A 348-amino-acid polypeptide reads, in one-letter code: Rhodopsin (348 aa).

Methionine 1 bears the N-acetylmethionine mark. The Extracellular segment spans residues 1–36 (MNGTEGPNFYVPFSNATGVVRSPFEYPQYYLAEPWQ). Asparagine 2 and asparagine 15 each carry an N-linked (GlcNAc...) asparagine glycan. Residues 37 to 61 (FSMLAAYMFMLIVLGFPINFLTLYV) form a helical membrane-spanning segment. Residues 62-73 (TVQHKKLRTPLN) are Cytoplasmic-facing. The helical transmembrane segment at 74-96 (YILLNLAVADLFMVFGGFTTTLY) threads the bilayer. The Extracellular segment spans residues 97–110 (TSLHGYFVFGPTGC). Cysteines 110 and 187 form a disulfide. A helical membrane pass occupies residues 111-133 (NLEGFFATLGGEIALWSLVVLAI). Positions 134–136 (ERY) match the 'Ionic lock' involved in activated form stabilization motif. At 134–152 (ERYVVVCKPMSNFRFGENH) the chain is on the cytoplasmic side. The chain crosses the membrane as a helical span at residues 153 to 173 (AIMGLVFTWIMALACAAPPLV). Topologically, residues 174 to 202 (GWSRYIPEGMQCSCGIDYYTLKPEVNNES) are extracellular. Glutamate 201 contributes to the Zn(2+) binding site. The chain crosses the membrane as a helical span at residues 203–224 (FVIYMFVVHFFIPLFVIFFCYG). Residues 225–252 (QLVFTVKEAAAQQQESATTQKAEKEVTR) are Cytoplasmic-facing. The chain crosses the membrane as a helical span at residues 253–274 (MVIIMVIAFLICWLPYAGVAFY). Residues 275 to 286 (IFTHQGSNFGPI) are Extracellular-facing. Glutamine 279 is a Zn(2+) binding site. The helical transmembrane segment at 287–308 (FMTLPAFFAKTASIYNPVIYIM) threads the bilayer. N6-(retinylidene)lysine is present on lysine 296. Topologically, residues 309–348 (MNKQFRTCMITTLCCGKNPLGDDEASTTASKTETSQVAPA) are cytoplasmic. Residues cysteine 322 and cysteine 323 are each lipidated (S-palmitoyl cysteine). The interaction with SAG stretch occupies residues 330 to 348 (DDEASTTASKTETSQVAPA). The residue at position 334 (serine 334) is a Phosphoserine. 2 positions are modified to phosphothreonine: threonine 335 and threonine 336. At serine 338 the chain carries Phosphoserine. Phosphothreonine occurs at positions 340 and 342. The residue at position 343 (serine 343) is a Phosphoserine.

The protein belongs to the G-protein coupled receptor 1 family. Opsin subfamily. As to quaternary structure, homodimer. May form a complex composed of RHO, GRK1 and RCVRN in a Ca(2+)-dependent manner; RCVRN prevents the interaction between GRK1 and RHO. Interacts with GRK1. Interacts (phosphorylated form) with SAG. Interacts with GNAT1. Interacts with GNAT3. SAG and G-proteins compete for a common binding site. Interacts with PRCD; the interaction promotes PRCD stability. Forms a complex with ASAP1 and ARF4. Forms a complex with ASAP1, RAB11A, Rabin8/RAB3IP, ARF4 and RAB11FIP3; the complex regulates Golgi-to-cilia rhodopsin/RHO transport in photoreceptors. Phosphorylated on some or all of the serine and threonine residues present in the C-terminal region. Post-translationally, contains one covalently linked retinal chromophore. Upon light absorption, the covalently bound 11-cis-retinal is converted to all-trans-retinal. After hydrolysis of the Schiff base and release of the covalently bound all-trans-retinal, active rhodopsin is regenerated by binding of a fresh molecule of 11-cis-retinal.

The protein localises to the membrane. It is found in the cell projection. It localises to the cilium. Its subcellular location is the photoreceptor outer segment. Functionally, photoreceptor required for image-forming vision at low light intensity. Required for photoreceptor cell viability after birth. Light-induced isomerization of 11-cis to all-trans retinal triggers a conformational change that activates signaling via G-proteins. Subsequent receptor phosphorylation mediates displacement of the bound G-protein alpha subunit by the arrestin SAG and terminates signaling. The protein is Rhodopsin (RHO) of Otolemur crassicaudatus (Brown greater galago).